Here is a 1030-residue protein sequence, read N- to C-terminus: Halotolerance protein 9 (1030 aa).

The zn(2)-C6 fungal-type DNA-binding region spans 136–166 (CDHCRKRKIRCDEVDQQTKKCSNCIKFQLPC). The tract at residues 185-208 (HHATPGESLQTSNSISNPVASSSV) is disordered. Over residues 196-208 (SNSISNPVASSSV) the composition is skewed to low complexity. Residues serine 221 and serine 937 each carry the phosphoserine modification.

The protein localises to the cytoplasm. It is found in the nucleus. Functionally, putative transcription factor involved in halotolerance. The sequence is that of Halotolerance protein 9 (HAL9) from Saccharomyces cerevisiae (strain ATCC 204508 / S288c) (Baker's yeast).